The sequence spans 372 residues: Glutamate 5-kinase (372 aa).

K14 contacts ATP. Substrate contacts are provided by S54, D141, and N153. ATP-binding positions include 173-174 (TD) and 215-221 (SGGMLTK). Residues 280–358 (AGKVVVDEGA…HEIEHILGYI (79 aa)) form the PUA domain.

Belongs to the glutamate 5-kinase family.

The protein resides in the cytoplasm. The enzyme catalyses L-glutamate + ATP = L-glutamyl 5-phosphate + ADP. It participates in amino-acid biosynthesis; L-proline biosynthesis; L-glutamate 5-semialdehyde from L-glutamate: step 1/2. Functionally, catalyzes the transfer of a phosphate group to glutamate to form L-glutamate 5-phosphate. The protein is Glutamate 5-kinase of Methylobacillus flagellatus (strain ATCC 51484 / DSM 6875 / VKM B-1610 / KT).